A 236-amino-acid chain; its full sequence is Increased recombination centers protein 22-2 (236 aa).

A signal peptide spans 1 to 19; it reads MKFSAILTALTATIATVAG. Over 20–161 the chain is Lumenal; sequence YETSGKPHTV…AAVSFFDPRL (142 aa). Residues 162–182 form a helical membrane-spanning segment; that stretch reads IFLELVLLATFGGIAYFVYEI. Over 183-236 the chain is Cytoplasmic; it reads WGKQYLRGTAPVKVPVKKSGSPVAVKEASPVGSASGFDESWIPEAHLKKNKKKA.

Belongs to the IRC22 family.

It is found in the endoplasmic reticulum membrane. Is probably involved in a pathway contributing to genomic integrity. In Candida tropicalis (strain ATCC MYA-3404 / T1) (Yeast), this protein is Increased recombination centers protein 22-2 (IRC22-2).